The chain runs to 370 residues: NSFL1 cofactor p47 (370 aa).

Positions 54 to 73 (SQATPSSVSRGTAPSDNRVT) are disordered. 3 positions are modified to phosphoserine: Ser74, Ser102, and Ser114. Disordered stretches follow at residues 80-116 (HDQD…KSPN) and 138-157 (TKSP…GYRL). The Nuclear localization signal motif lies at 109 to 115 (PPRKKSP). Ser140 bears the Phosphoserine; by CDK1 mark. Tyr167 is subject to Phosphotyrosine. The short motif at 172–175 (RRRH) is the Nuclear localization signal element. Residues Ser176, Ser192, and Ser272 each carry the phosphoserine modification. One can recognise an SEP domain in the interval 179–244 (DVHVVLKLWK…MEDHRDEDFV (66 aa)). Residues 291–368 (EAEPTTNIQI…NLLNAVIVQR (78 aa)) enclose the UBX domain.

It belongs to the NSFL1C family. Part of a ternary complex containing STX5A, NSFL1C and VCP. NSFL1C forms a homotrimer that binds to one end of a VCP homohexamer. The complex binds to membranes enriched in phosphatidylethanolamine-containing lipids and promotes Golgi membrane fusion. Interaction with VCIP135 leads to dissociation of the complex via ATP hydrolysis by VCP. Binds ubiquitin and mono-ubiquitinated proteins via its N-terminal UBA-like domain when bound to VCP. Post-translationally, phosphorylated during mitosis. Phosphorylation inhibits interaction with Golgi membranes and is required for the fragmentation of the Golgi stacks during mitosis. In terms of tissue distribution, highly expressed in heart, brain, spleen, lung, liver, muscle, kidney and testis.

It is found in the nucleus. The protein localises to the golgi apparatus. It localises to the golgi stack. The protein resides in the chromosome. Its subcellular location is the cytoplasm. It is found in the cytoskeleton. The protein localises to the microtubule organizing center. It localises to the centrosome. Its function is as follows. Reduces the ATPase activity of VCP. Necessary for the fragmentation of Golgi stacks during mitosis and for VCP-mediated reassembly of Golgi stacks after mitosis. May play a role in VCP-mediated formation of transitional endoplasmic reticulum (tER). Inhibits the activity of CTSL (in vitro). Together with UBXN2B/p37, regulates the centrosomal levels of kinase AURKA/Aurora A during mitotic progression by promoting AURKA removal from centrosomes in prophase. Also, regulates spindle orientation during mitosis. In Rattus norvegicus (Rat), this protein is NSFL1 cofactor p47 (Nsfl1c).